Consider the following 415-residue polypeptide: tRNA(Ile)-lysidine synthase (415 aa).

An ATP-binding site is contributed by 36–41; it reads SGGRDS.

The protein belongs to the tRNA(Ile)-lysidine synthase family.

It is found in the cytoplasm. The enzyme catalyses cytidine(34) in tRNA(Ile2) + L-lysine + ATP = lysidine(34) in tRNA(Ile2) + AMP + diphosphate + H(+). In terms of biological role, ligates lysine onto the cytidine present at position 34 of the AUA codon-specific tRNA(Ile) that contains the anticodon CAU, in an ATP-dependent manner. Cytidine is converted to lysidine, thus changing the amino acid specificity of the tRNA from methionine to isoleucine. This Tropheryma whipplei (strain Twist) (Whipple's bacillus) protein is tRNA(Ile)-lysidine synthase.